Reading from the N-terminus, the 55-residue chain is Large ribosomal subunit protein bL33 (55 aa).

Belongs to the bacterial ribosomal protein bL33 family.

The polypeptide is Large ribosomal subunit protein bL33 (Aliivibrio salmonicida (strain LFI1238) (Vibrio salmonicida (strain LFI1238))).